Here is a 562-residue protein sequence, read N- to C-terminus: NAD-dependent malic enzyme (562 aa).

The active-site Proton donor is the Tyr-101. Residue Arg-154 participates in NAD(+) binding. Lys-172 (proton acceptor) is an active-site residue. The a divalent metal cation site is built by Glu-243, Asp-244, and Asp-267. Residues Asp-267 and Asn-415 each contribute to the NAD(+) site.

This sequence belongs to the malic enzymes family. Homotetramer. Mg(2+) serves as cofactor. Requires Mn(2+) as cofactor.

The enzyme catalyses (S)-malate + NAD(+) = pyruvate + CO2 + NADH. It carries out the reaction oxaloacetate + H(+) = pyruvate + CO2. The protein is NAD-dependent malic enzyme of Shewanella sp. (strain ANA-3).